The sequence spans 377 residues: Cytochrome b (377 aa).

4 helical membrane-spanning segments follow: residues 34–54 (FGFL…FLSM), 78–100 (WLLR…IHIA), 113–133 (TWMT…LGYV), and 179–199 (FFTL…IHLL). Heme b contacts are provided by histidine 84 and histidine 98. Residues histidine 183 and histidine 197 each contribute to the heme b site. Histidine 202 serves as a coordination point for a ubiquinone. A run of 4 helical transmembrane segments spans residues 225 to 245 (FTIK…ILVL), 288 to 308 (KLGG…LPLY), 323 to 343 (MLFW…AQAI), and 352 to 372 (QILT…SVLW).

It belongs to the cytochrome b family. In terms of assembly, the main subunits of complex b-c1 are: cytochrome b, cytochrome c1 and the Rieske protein. Requires heme b as cofactor.

The protein resides in the mitochondrion inner membrane. Its function is as follows. Component of the ubiquinol-cytochrome c reductase complex (complex III or cytochrome b-c1 complex) that is part of the mitochondrial respiratory chain. The b-c1 complex mediates electron transfer from ubiquinol to cytochrome c. Contributes to the generation of a proton gradient across the mitochondrial membrane that is then used for ATP synthesis. The protein is Cytochrome b (mt:Cyt-b) of Priapulus caudatus (Priapulid worm).